Reading from the N-terminus, the 403-residue chain is MSKFNRMHLIVLDSVGIGAAPDANNFVNAGVPDGASDTLGHISKTVGLNVPNMAKLGLGNIPREQPLKTVPAESNPTGYATKLEEVSLGKDTMTGHWEIMGLNITEPFDTFWNGFPEEILTQIEEFSGRKVIRESNRPYSGTAVIDDFGPRQMETGELIIYTSADPVLQIAAHEDIIPVEELYRICEFARSITLERPALLGRIIARPYVGEPGNFTRTSNRRDLAISPFAPTVLDKLNEAGIDTYSVGKISDIFNGEGINHDMGHNKSNNHGVDNLIKAMTSEDFKHGFSFTNLVDFDALYGHRRNPQGYRDCLHEFDERLPEIIAAMKEDDLLMITADHGNDPTYAGTDHTREYIPFLAYSPSFKSSGLIPVGHFADISATIADNFGVEKAMIGESFLDKLV.

Mn(2+) contacts are provided by aspartate 13, aspartate 298, histidine 303, aspartate 339, histidine 340, and histidine 351.

This sequence belongs to the phosphopentomutase family. Requires Mn(2+) as cofactor.

Its subcellular location is the cytoplasm. It carries out the reaction 2-deoxy-alpha-D-ribose 1-phosphate = 2-deoxy-D-ribose 5-phosphate. The enzyme catalyses alpha-D-ribose 1-phosphate = D-ribose 5-phosphate. Its pathway is carbohydrate degradation; 2-deoxy-D-ribose 1-phosphate degradation; D-glyceraldehyde 3-phosphate and acetaldehyde from 2-deoxy-alpha-D-ribose 1-phosphate: step 1/2. Isomerase that catalyzes the conversion of deoxy-ribose 1-phosphate (dRib-1-P) and ribose 1-phosphate (Rib-1-P) to deoxy-ribose 5-phosphate (dRib-5-P) and ribose 5-phosphate (Rib-5-P), respectively. In Streptococcus thermophilus, this protein is Phosphopentomutase.